We begin with the raw amino-acid sequence, 506 residues long: Serine/threonine-protein kinase RIO1 (506 aa).

The tract at residues 22 to 52 (TASSSSDDEPEQAVVKQEKLEAGEQIEEQYD) is disordered. In terms of domain architecture, Protein kinase spans 142–506 (LNIDGCISTG…KKRAHRQHMK (365 aa)). Residues 148-156 (ISTGKEANV), Lys169, and Leu241 contribute to the ATP site. The active-site Proton acceptor is the Asp285. Asn290 is an ATP binding site. The Mg(2+) site is built by Asn290 and Asp302. The active-site 4-aspartylphosphate intermediate is the Asp302. The interval 418 to 506 (GDGFGEEHDD…KKRAHRQHMK (89 aa)) is disordered. Residues 424 to 435 (EHDDSDDNDDEE) show a composition bias toward acidic residues. Residues 454–490 (EKERKIAMHTRNREETAEERKERKAAVKEEKREQRKE) show a composition bias toward basic and acidic residues. Basic residues predominate over residues 491–506 (KIPKHLKKRAHRQHMK).

This sequence belongs to the protein kinase superfamily. RIO-type Ser/Thr kinase family. Requires Mg(2+) as cofactor. In terms of tissue distribution, expressed in vulva and uterine cells, uterine seam cells (utse), spermatheca and in the nervous system including chemosensory neurons in the head, nerve ring neurons (RID/RIF), inhibitory motor neurons (DA/DD/VA/VD), mechanosensory neurons (ALML/PLML) and tail sensory neurons (DVA//PDA). Also expressed in intestine and pharynx (procorpus) and rectal valve and gland.

The protein localises to the cytoplasm. It carries out the reaction L-seryl-[protein] + ATP = O-phospho-L-seryl-[protein] + ADP + H(+). The catalysed reaction is L-threonyl-[protein] + ATP = O-phospho-L-threonyl-[protein] + ADP + H(+). Involved in the final steps of cytoplasmic maturation of the 40S ribosomal subunit. Despite the protein kinase domain is proposed to act predominantly as an ATPase. The catalytic activity regulates its dynamic association with the 40S subunit. Plays a role in oogenesis by regulating germ cell proliferation, progression through diplotene and diakinesis stages and oocyte maturation. Regulates germline development probably by regulating the phosphorylation of mpk-1. Involved in larval development. The sequence is that of Serine/threonine-protein kinase RIO1 from Caenorhabditis elegans.